The chain runs to 167 residues: Endothelin-3 (167 aa).

The signal sequence occupies residues 1–19 (MELGLWLLLGLTVTSAAAA). A propeptide spanning residues 20 to 50 (LPAQPGNAGQERGPGRSGDQEEKRVPAHHRP) is cleaved from the precursor. The interval 22–45 (AQPGNAGQERGPGRSGDQEEKRVP) is disordered. 2 disulfide bridges follow: C53/C67 and C55/C63. A propeptide spanning residues 74–167 (INTPEQTVPY…KSRTDKVHQP (94 aa)) is cleaved from the precursor. The tract at residues 85–112 (LSNHRGSLRGKRSSGPVPESSQSSPQTR) is disordered. The segment covering 97 to 109 (SSGPVPESSQSSP) has biased composition (low complexity). The segment at 115 to 135 (CACSGVDDKACAYFCAHVTSY) is endothelin-like. Residues 140 to 149 (EKAAAEEKQE) show a composition bias toward basic and acidic residues. Residues 140–167 (EKAAAEEKQETGGPRQRLKSRTDKVHQP) are disordered.

It belongs to the endothelin/sarafotoxin family.

The protein localises to the secreted. Its function is as follows. Endothelins are endothelium-derived vasoconstrictor peptides. The chain is Endothelin-3 (Edn3) from Rattus norvegicus (Rat).